Reading from the N-terminus, the 403-residue chain is tRNA(Met) cytidine acetate ligase (403 aa).

ATP-binding positions include 7 to 20, Gly-102, Asn-168, and Arg-193; that span reads IVEY…HLYH.

This sequence belongs to the TmcAL family.

The protein localises to the cytoplasm. It carries out the reaction cytidine(34) in elongator tRNA(Met) + acetate + ATP = N(4)-acetylcytidine(34) in elongator tRNA(Met) + AMP + diphosphate. Functionally, catalyzes the formation of N(4)-acetylcytidine (ac(4)C) at the wobble position of elongator tRNA(Met), using acetate and ATP as substrates. First activates an acetate ion to form acetyladenylate (Ac-AMP) and then transfers the acetyl group to tRNA to form ac(4)C34. The sequence is that of tRNA(Met) cytidine acetate ligase from Clostridium tetani (strain Massachusetts / E88).